Consider the following 440-residue polypeptide: V-type ATP synthase beta chain (440 aa).

Belongs to the ATPase alpha/beta chains family.

Produces ATP from ADP in the presence of a proton gradient across the membrane. The V-type beta chain is a regulatory subunit. In Geotalea uraniireducens (strain Rf4) (Geobacter uraniireducens), this protein is V-type ATP synthase beta chain.